The chain runs to 415 residues: Serine hydroxymethyltransferase (415 aa).

(6S)-5,6,7,8-tetrahydrofolate contacts are provided by residues Leu119 and 123–125 (GHL). Position 228 is an N6-(pyridoxal phosphate)lysine (Lys228). 353–355 (SPF) lines the (6S)-5,6,7,8-tetrahydrofolate pocket.

Belongs to the SHMT family. As to quaternary structure, homodimer. It depends on pyridoxal 5'-phosphate as a cofactor.

It is found in the cytoplasm. The catalysed reaction is (6R)-5,10-methylene-5,6,7,8-tetrahydrofolate + glycine + H2O = (6S)-5,6,7,8-tetrahydrofolate + L-serine. Its pathway is one-carbon metabolism; tetrahydrofolate interconversion. The protein operates within amino-acid biosynthesis; glycine biosynthesis; glycine from L-serine: step 1/1. Catalyzes the reversible interconversion of serine and glycine with tetrahydrofolate (THF) serving as the one-carbon carrier. Also exhibits THF-independent aldolase activity toward beta-hydroxyamino acids, producing glycine and aldehydes, via a retro-aldol mechanism. The sequence is that of Serine hydroxymethyltransferase from Halorubrum lacusprofundi (strain ATCC 49239 / DSM 5036 / JCM 8891 / ACAM 34).